The following is a 158-amino-acid chain: Snaclec convulxin subunit alpha (158 aa).

The N-terminal stretch at 1–23 (MGRFIFVSFGLLVLFLSLSGTGA) is a signal peptide. Intrachain disulfides connect cysteine 27–cysteine 38, cysteine 55–cysteine 152, and cysteine 127–cysteine 144. The C-type lectin domain maps to 34 to 158 (YDQHCYRIFN…PFVCKFPPQC (125 aa)).

It belongs to the snaclec family. Tetramer of heterodimers of alpha and beta subunits (alphabeta)(4); disulfide-linked. Expressed by the venom gland.

The protein resides in the secreted. In terms of biological role, snake venom lectin that activates platelets by binding to the platelet collagen receptor glycoprotein VI (GP6). The indirect activation of integrin alpha-IIb/beta-3 (ITGA2B/ITGB3) also induced by the toxin is upstream the cytoskeletal translocation of GPIb, FcRgamma (FCER1G) and 14-3-3zeta (YWHAZ). This chain is Snaclec convulxin subunit alpha, found in Crotalus durissus terrificus (South American rattlesnake).